Reading from the N-terminus, the 427-residue chain is Delta(14)-sterol reductase (427 aa).

The Cytoplasmic segment spans residues 1–25 (MSEQESRDNAAVDAVRQKYGFGFSW). Residues 26-46 (LVLMIALPPLVYYLWICVTYY) traverse the membrane as a helical segment. The Periplasmic segment spans residues 47-70 (QGELVFTSDAAAWRRFWSHVAPPT). Residues 71-91 (WHAAGLYAAWFLGQAALQVWA) form a helical membrane-spanning segment. Over 92–110 (PGPTVQGMKLPDGSRLDYR) the chain is Cytoplasmic. Residues 111 to 131 (MNGIFSFLFTLAVVFGLVTMG) form a helical membrane-spanning segment. Residues 132–141 (WLDATVLYDQ) are Periplasmic-facing. The chain crosses the membrane as a helical span at residues 142–162 (LGPLLTVVNIFTFVFAGFLYF). At 163-197 (WGLNGKQWERPTGRPFYDYFMGTALNPRIGSLDLK) the chain is on the cytoplasmic side. The helical transmembrane segment at 198–218 (LFCEARPGMIFWLLMNLSMAA) threads the bilayer. The Periplasmic segment spans residues 219–226 (KQYELHGT). The chain crosses the membrane as a helical span at residues 227 to 247 (VTVPMLLVVGFQSFYLIDYFI). Over 248 to 262 (HEEAVLTTWDIKHEK) the chain is Cytoplasmic. Residues 263 to 283 (FGWMLCWGDLVWLPFTYTLQA) traverse the membrane as a helical segment. The Periplasmic segment spans residues 284-291 (QYLVHHTH). The helical transmembrane segment at 292–312 (DLPVWGIIAIVALNLAGYAIF) threads the bilayer. Residues 313 to 356 (RGANIQKHHFRRDPNRIVWGKPAKYIKTKQGSLLLTSGWWGIAR) lie on the Cytoplasmic side of the membrane. NADP(+) contacts are provided by residues K319, R323, L347, W352, and 359–360 (NY). The chain crosses the membrane as a helical span at residues 357–377 (HMNYFGDLMIALSWCLPAAFG). Position 378 (S378) is a topological domain, periplasmic. A helical membrane pass occupies residues 379 to 399 (PIPYFHIVYFTILLLHREKRD). NADP(+)-binding positions include D399, 403-407 (CLAKY), and Y414. The Cytoplasmic segment spans residues 400 to 427 (DAMCLAKYGEDWLQYRKKVPWRIVPKIY).

This sequence belongs to the ERG4/ERG24 family.

It localises to the cell inner membrane. It carries out the reaction 4,4-dimethyl-5alpha-cholesta-8,24-dien-3beta-ol + NADP(+) = 4,4-dimethyl-5alpha-cholesta-8,14,24-trien-3beta-ol + NADPH + H(+). It participates in steroid biosynthesis; zymosterol biosynthesis; zymosterol from lanosterol. In terms of biological role, reduces the C14=C15 double bond of 4,4-dimethyl-cholesta-8,14,24-trienol to produce 4,4-dimethyl-cholesta-8,24-dienol. Complements the deletion of the Delta(14)-sterol reductase gene ERG24 in yeast. This Methylotuvimicrobium alcaliphilum (strain DSM 19304 / NCIMB 14124 / VKM B-2133 / 20Z) (Methylomicrobium alcaliphilum) protein is Delta(14)-sterol reductase.